Consider the following 240-residue polypeptide: UDP-2,3-diacylglucosamine hydrolase (240 aa).

Mn(2+) contacts are provided by aspartate 8, histidine 10, aspartate 41, asparagine 79, and histidine 114. 79–80 (NR) contributes to the substrate binding site. 5 residues coordinate substrate: aspartate 122, serine 160, asparagine 164, lysine 167, and histidine 195. Histidine 195 and histidine 197 together coordinate Mn(2+).

This sequence belongs to the LpxH family. Mn(2+) is required as a cofactor.

It is found in the cell inner membrane. It catalyses the reaction UDP-2-N,3-O-bis[(3R)-3-hydroxytetradecanoyl]-alpha-D-glucosamine + H2O = 2-N,3-O-bis[(3R)-3-hydroxytetradecanoyl]-alpha-D-glucosaminyl 1-phosphate + UMP + 2 H(+). The protein operates within glycolipid biosynthesis; lipid IV(A) biosynthesis; lipid IV(A) from (3R)-3-hydroxytetradecanoyl-[acyl-carrier-protein] and UDP-N-acetyl-alpha-D-glucosamine: step 4/6. Functionally, hydrolyzes the pyrophosphate bond of UDP-2,3-diacylglucosamine to yield 2,3-diacylglucosamine 1-phosphate (lipid X) and UMP by catalyzing the attack of water at the alpha-P atom. Involved in the biosynthesis of lipid A, a phosphorylated glycolipid that anchors the lipopolysaccharide to the outer membrane of the cell. The protein is UDP-2,3-diacylglucosamine hydrolase of Escherichia coli O7:K1 (strain IAI39 / ExPEC).